The primary structure comprises 182 residues: Large ribosomal subunit protein uL6 (182 aa).

Belongs to the universal ribosomal protein uL6 family. Part of the 50S ribosomal subunit.

Its function is as follows. This protein binds to the 23S rRNA, and is important in its secondary structure. It is located near the subunit interface in the base of the L7/L12 stalk, and near the tRNA binding site of the peptidyltransferase center. This chain is Large ribosomal subunit protein uL6, found in Caldicellulosiruptor bescii (strain ATCC BAA-1888 / DSM 6725 / KCTC 15123 / Z-1320) (Anaerocellum thermophilum).